The following is a 359-amino-acid chain: AA9 family lytic polysaccharide monooxygenase B (359 aa).

The signal sequence occupies residues 1-18; sequence MQLFTSFSLLAVASFASA. Residues H19 and H102 each coordinate Cu(2+). 2 disulfides stabilise this stretch: C72-C190 and C113-C117. An N-linked (GlcNAc...) asparagine glycan is attached at N150. Positions 176 and 185 each coordinate O2. Y187 provides a ligand contact to Cu(2+). Positions 241–310 are disordered; it reads GGSPGNSAEP…STNINPTSLK (70 aa). Polar residues predominate over residues 245 to 254; sequence GNSAEPQPQH. Over residues 255-304 the composition is skewed to low complexity; the sequence is TSTAVSTAKTASTSSLTTSVTITSQAPSNTANPPQSITTTTTPKPQSTNI. N345 carries an N-linked (GlcNAc...) asparagine glycan.

Belongs to the polysaccharide monooxygenase AA9 family. Requires Cu(2+) as cofactor.

Its subcellular location is the secreted. It catalyses the reaction [(1-&gt;4)-beta-D-glucosyl]n+m + reduced acceptor + O2 = 4-dehydro-beta-D-glucosyl-[(1-&gt;4)-beta-D-glucosyl]n-1 + [(1-&gt;4)-beta-D-glucosyl]m + acceptor + H2O.. Its function is as follows. Lytic polysaccharide monooxygenase (LPMO) that depolymerizes crystalline and amorphous polysaccharides via the oxidation of scissile alpha- or beta-(1-4)-glycosidic bonds, yielding C1 and C4 oxidation products. Catalysis by LPMOs requires the reduction of the active-site copper from Cu(II) to Cu(I) by a reducing agent and H(2)O(2) or O(2) as a cosubstrate. Active on cellulose and on xyloglucan for deconstruction of plant biomass. The sequence is that of AA9 family lytic polysaccharide monooxygenase B from Geotrichum candidum (Oospora lactis).